The following is a 551-amino-acid chain: High-affinity glucose transporter (551 aa).

The Cytoplasmic segment spans residues Met1–Asn27. A helical membrane pass occupies residues Ile28–Ser48. Residues Met49–Tyr70 lie on the Extracellular side of the membrane. Residues Gly71–Phe91 traverse the membrane as a helical segment. Residues Ser92 to Lys98 lie on the Cytoplasmic side of the membrane. The helical transmembrane segment at Val99–Gln119 threads the bilayer. The Extracellular segment spans residues Asp120–Met123. Residues Leu124–Val144 traverse the membrane as a helical segment. At Tyr145 to Arg155 the chain is on the cytoplasmic side. A helical membrane pass occupies residues Gly156–Ile176. At Gly177–Arg190 the chain is on the extracellular side. A helical transmembrane segment spans residues Ile191 to Pro211. At Glu212–Gln289 the chain is on the cytoplasmic side. Residues Leu290–Thr310 form a helical membrane-spanning segment. Over Gly311 to Leu315 the chain is Extracellular. A helical transmembrane segment spans residues Val316–Ile336. Residues Asp337–Pro343 lie on the Cytoplasmic side of the membrane. The chain crosses the membrane as a helical span at residues Val344–Ala364. Residues Thr365–Val395 are Extracellular-facing. An N-linked (GlcNAc...) asparagine glycan is attached at Asn388. The helical transmembrane segment at Ile396 to Ile416 threads the bilayer. The Cytoplasmic segment spans residues Tyr417 to Ala432. A helical transmembrane segment spans residues Leu433–Phe453. Residues Lys454–Lys459 are Extracellular-facing. The chain crosses the membrane as a helical span at residues Thr460 to Pro480. At Glu481 to Asn551 the chain is on the cytoplasmic side.

Belongs to the major facilitator superfamily. Sugar transporter (TC 2.A.1.1) family.

Its subcellular location is the membrane. Its function is as follows. High-affinity glucose transporter. The polypeptide is High-affinity glucose transporter (HGT1) (Kluyveromyces lactis (strain ATCC 8585 / CBS 2359 / DSM 70799 / NBRC 1267 / NRRL Y-1140 / WM37) (Yeast)).